The following is a 128-amino-acid chain: Thor profilin (128 aa).

The protein belongs to the Asgard profilin family.

It localises to the cytoplasm. The protein resides in the cytoskeleton. Functionally, has no profilin activity against rabbit actin. The sequence is that of Thor profilin from Thorarchaeota archaeon (strain AB_25).